We begin with the raw amino-acid sequence, 333 residues long: Ribosomal RNA small subunit methyltransferase C (333 aa).

This sequence belongs to the methyltransferase superfamily. RsmC family. Monomer.

It is found in the cytoplasm. The enzyme catalyses guanosine(1207) in 16S rRNA + S-adenosyl-L-methionine = N(2)-methylguanosine(1207) in 16S rRNA + S-adenosyl-L-homocysteine + H(+). In terms of biological role, specifically methylates the guanine in position 1207 of 16S rRNA in the 30S particle. The chain is Ribosomal RNA small subunit methyltransferase C from Actinobacillus succinogenes (strain ATCC 55618 / DSM 22257 / CCUG 43843 / 130Z).